Here is a 486-residue protein sequence, read N- to C-terminus: Malonate-semialdehyde dehydrogenase 2 (486 aa).

NAD(+) is bound by residues F154, K178, E181, R182, and S231. Residue C286 is the Nucleophile of the active site. Residue E386 participates in NAD(+) binding.

Belongs to the aldehyde dehydrogenase family. IolA subfamily. Homotetramer.

It catalyses the reaction 3-oxopropanoate + NAD(+) + CoA + H2O = hydrogencarbonate + acetyl-CoA + NADH + H(+). The enzyme catalyses 2-methyl-3-oxopropanoate + NAD(+) + CoA + H2O = propanoyl-CoA + hydrogencarbonate + NADH + H(+). It functions in the pathway polyol metabolism; myo-inositol degradation into acetyl-CoA; acetyl-CoA from myo-inositol: step 7/7. Functionally, catalyzes the oxidation of malonate semialdehyde (MSA) and methylmalonate semialdehyde (MMSA) into acetyl-CoA and propanoyl-CoA, respectively. Is involved in a myo-inositol catabolic pathway. Bicarbonate, and not CO2, is the end-product of the enzymatic reaction. This chain is Malonate-semialdehyde dehydrogenase 2, found in Oceanobacillus iheyensis (strain DSM 14371 / CIP 107618 / JCM 11309 / KCTC 3954 / HTE831).